The chain runs to 513 residues: GMP synthase [glutamine-hydrolyzing] (513 aa).

Residues 7-197 (TILVLDFGGQ…LFGVCGCTGE (191 aa)) form the Glutamine amidotransferase type-1 domain. Catalysis depends on cysteine 84, which acts as the Nucleophile. Active-site residues include histidine 171 and glutamate 173. The GMPS ATP-PPase domain occupies 198-387 (WTMENFIEEQ…LGLPEDIVWR (190 aa)). Position 225–231 (225–231 (SGGVDSS)) interacts with ATP.

In terms of assembly, homodimer.

It catalyses the reaction XMP + L-glutamine + ATP + H2O = GMP + L-glutamate + AMP + diphosphate + 2 H(+). Its pathway is purine metabolism; GMP biosynthesis; GMP from XMP (L-Gln route): step 1/1. Catalyzes the synthesis of GMP from XMP. The polypeptide is GMP synthase [glutamine-hydrolyzing] (Heliobacterium modesticaldum (strain ATCC 51547 / Ice1)).